A 355-amino-acid chain; its full sequence is tRNA pseudouridine synthase D (355 aa).

The active-site Nucleophile is D84. Residues 160–306 form the TRUD domain; that stretch reads GVPNYFGLQR…MAHERRILRL (147 aa).

This sequence belongs to the pseudouridine synthase TruD family.

It catalyses the reaction uridine(13) in tRNA = pseudouridine(13) in tRNA. Responsible for synthesis of pseudouridine from uracil-13 in transfer RNAs. The chain is tRNA pseudouridine synthase D from Pseudomonas aeruginosa (strain LESB58).